A 334-amino-acid polypeptide reads, in one-letter code: Protein NlpD/LppB homolog (334 aa).

One can recognise a LysM domain in the interval 89-133 (IFYIVKSKDTMYSIAKNSGYNYHELSKFNSIKKPYKIIIGQKIWM).

The protein belongs to the E.coli NlpD/Haemophilus LppB family.

This Buchnera aphidicola subsp. Acyrthosiphon pisum (strain APS) (Acyrthosiphon pisum symbiotic bacterium) protein is Protein NlpD/LppB homolog.